A 24-amino-acid chain; its full sequence is Coenzyme PQQ synthesis protein A (24 aa).

The pyrroloquinoline quinone (Glu-Tyr) cross-link spans 16–20; it reads EVTMY.

Belongs to the PqqA family.

It participates in cofactor biosynthesis; pyrroloquinoline quinone biosynthesis. Required for coenzyme pyrroloquinoline quinone (PQQ) biosynthesis. PQQ is probably formed by cross-linking a specific glutamate to a specific tyrosine residue and excising these residues from the peptide. The polypeptide is Coenzyme PQQ synthesis protein A (Pseudomonas fluorescens (strain Pf0-1)).